The following is a 405-amino-acid chain: Accessory Sec system protein translocase subunit SecY2 (405 aa).

The next 10 helical transmembrane spans lie at 14 to 34, 65 to 85, 104 to 124, 131 to 151, 156 to 176, 190 to 210, 243 to 263, 285 to 305, 343 to 363, and 368 to 388; these read MCTL…LPFV, LFSI…MFSF, MYLT…NLPV, FLVF…LVWL, ATIG…ASLP, LGLL…VVLF, GMPY…LLLL, PLWI…FAFV, FALI…LFVL, and LLKV…LFTI.

This sequence belongs to the SecY/SEC61-alpha family. SecY2 subfamily. In terms of assembly, component of the accessory SecA2/SecY2 protein translocase complex required to export cell wall proteins. May form heterotrimers with SecE and SecG subunits.

Its subcellular location is the cell membrane. Part of the accessory SecA2/SecY2 system specifically required for export of possible cell wall proteins. The central subunit of a protein translocation channel. The sequence is that of Accessory Sec system protein translocase subunit SecY2 from Streptococcus oralis (strain Uo5).